The chain runs to 946 residues: MQRPVCLLIWLFLLEAQAFEIPINGNSEFAEYSDLVELAPDKLPFVQENGRHQRSLPEESGEETDTVDPVTLYSYKVQSTITSRVATTTIQSKLVNNSPLPQSVVFDVQIPKGAFISNFTMTVNGMTFTSSIKEKTVGRALYSQARAKGKTAGWVRSRTLDMENFNTEVNIPPGAKVQFELHYQEVKWRKLGSYEHKIHLQPGKLAKHLEVNVWIIEPQGMRFLHVPDTFEGHFQGVPVISKGQQKAHVSFKPTVAQQRKCPNCTETAVNGELVVMYDVNREEKAGELEVFNGYFVHFFAPENLDPIPKNILFVIDVSGSMWGIKMKQTVEAMKTILDDLRTDDQFSVVDFNHNVRTWRNDLVSATKTQIADAKRYIEKIQPSGGTNINEALLRAIFILNEASNMGLLNPDSVSLIILVSDGDPTVGELKLSKIQKNVKQSIQDNISLFSLGIGFDVDYDFLKRLSNENRGIAQRIYGNQDTSSQLKKFYNQVSTPLLRNVQFNYPQASVTDVTQNNFHNYFGGSEIVVAGKFDPSKLTEVQSIITATSANTELVLETLSQMDDLEEFLSKDKHADPDFTKKLWAYLTINQLLAERSLAPTAAIKRKITKTILQMSLDHHIVTPLTAMVIENDAGDERMLADSPPQDHSCCSGALYYGTKVASGPIPSWANPSPTPMSAMLAVGAKPLESTPPTHLNQVENDPHFIIYLPKSKRNICFNIDSEPGKILSLVSDPESGIVVNGQLIGAKRAENGKLSTYFGKLGFYFQKEGMKIEISTETITLSSGSSTSRLSWSDTAHLGNSRVLISVKKEKSVTLTLNKELFFSVLLHRVWRKHPVNVDFLGIYAPPIDKFSPRVHGLLGQFMQEPAIHIFNERPGKEPGKPEASMEVKGHKLTVTRGLQKDYRTDIVFGTDVPCWFVHNSGKGFIDGHYKDYFVPQLYSFLKRP.

The signal sequence occupies residues 1-18 (MQRPVCLLIWLFLLEAQA). Residues 19-54 (FEIPINGNSEFAEYSDLVELAPDKLPFVQENGRHQR) constitute a propeptide that is removed on maturation. The 130-residue stretch at 56–185 (LPEESGEETD…KVQFELHYQE (130 aa)) folds into the VIT domain. Serine 60 carries the post-translational modification Phosphoserine. Asparagine 118 and asparagine 263 each carry an N-linked (GlcNAc...) asparagine glycan. Glutamate 282 and glutamate 283 each carry 4-carboxyglutamate. The 161-residue stretch at 308–468 (PKNILFVIDV…YDFLKRLSNE (161 aa)) folds into the VWFA domain. Asparagine 445 carries an N-linked (GlcNAc...) asparagine glycan. Serine 466 is modified (phosphoserine). An Aspartate 1-(chondroitin 4-sulfate)-ester modification is found at aspartate 702. Positions 703–946 (PHFIIYLPKS…PQLYSFLKRP (244 aa)) are excised as a propeptide. Residue serine 886 is modified to Phosphoserine.

The protein belongs to the ITIH family. I-alpha-I plasma protease inhibitors are assembled from one or two heavy chains (HC) and one light chain, bikunin. Inter-alpha-inhibitor (I-alpha-I) is composed of ITIH1/HC1, ITIH2/HC2 and bikunin. Heavy chains are linked to bikunin via chondroitin 4-sulfate esterified to the alpha-carboxyl of the C-terminal aspartate after propeptide cleavage. In terms of processing, phosphorylated by FAM20C in the extracellular medium. As to expression, expressed in both liver and brain.

Its subcellular location is the secreted. In terms of biological role, may act as a carrier of hyaluronan in serum or as a binding protein between hyaluronan and other matrix protein, including those on cell surfaces in tissues to regulate the localization, synthesis and degradation of hyaluronan which are essential to cells undergoing biological processes. In Mus musculus (Mouse), this protein is Inter-alpha-trypsin inhibitor heavy chain H2 (Itih2).